A 244-amino-acid chain; its full sequence is Orotidine 5'-phosphate decarboxylase (244 aa).

Substrate is bound by residues Asp-18, Lys-43, 73–82 (DLKLADIGYI), Ser-130, 182–192 (PGVGAQGGKPG), Gly-206, and Arg-207. Lys-75 (proton donor) is an active-site residue.

It belongs to the OMP decarboxylase family. Type 1 subfamily. In terms of assembly, homodimer.

It catalyses the reaction orotidine 5'-phosphate + H(+) = UMP + CO2. It participates in pyrimidine metabolism; UMP biosynthesis via de novo pathway; UMP from orotate: step 2/2. Catalyzes the decarboxylation of orotidine 5'-monophosphate (OMP) to uridine 5'-monophosphate (UMP). This Aeropyrum pernix (strain ATCC 700893 / DSM 11879 / JCM 9820 / NBRC 100138 / K1) protein is Orotidine 5'-phosphate decarboxylase.